Reading from the N-terminus, the 118-residue chain is uncharacterized protein (118 aa).

This is an uncharacterized protein from Methanocaldococcus jannaschii (strain ATCC 43067 / DSM 2661 / JAL-1 / JCM 10045 / NBRC 100440) (Methanococcus jannaschii).